A 179-amino-acid polypeptide reads, in one-letter code: Large ribosomal subunit protein uL5c (179 aa).

The protein belongs to the universal ribosomal protein uL5 family. As to quaternary structure, part of the 50S ribosomal subunit; contacts the 5S rRNA.

The protein resides in the plastid. Its subcellular location is the chloroplast. Binds 5S rRNA, forms part of the central protuberance of the 50S subunit. The sequence is that of Large ribosomal subunit protein uL5c (rpl5) from Gracilaria tenuistipitata var. liui (Red alga).